The chain runs to 750 residues: MIEEMRKLLATLDDGEISPSAYDTAWVARIPSQSNATCPEFPETLEWIAHNQLPDGSWGDRNHFQIYDRVLSTVSCLVALKTWNLGHDNINKGERFLKQNIYKLTKDKGDLLCGFELIFMTMLEEAKQKGLDIPIDIPALKILQGYRQKKLQKIPLEMVHSIPTTILYSLEGLQDHINWEKILQFIGTDGSFLSSPSATACVYMHTKDPRCLEYLKGVVKKVKNSVPCQYAIDLFERLWIVDTLERLGIDRYFQPEIKNILDYVYKYWSDKKGIGWGRESYLKDIDDTSMGFRLLRLHGYKVTPDVFLNFMSSEDKFFCFPGESYHGASDIFNLYRASQVAFANDNILTKAKNYAHKYLSQLDKAYLDKWSAKKNFFQEVEFELSNQWNSCLPRAYSKSYIHNYGPNDIWIAKTIYRLPFVNNELFINLAKEDFNACQSIHQSEIQTLLRWWAALKFGDLPFFGDKVVTAHFSIASCMFEPEFSELRLFYTKYALLSSTLDDLADYYGSPAQTRCILEAIRSWDPSLVSHLSEEVQICFSGLYRTINEMVKSASKVQTGSSINIREHMQEQLAKLISAQLVDAEWMERKHIPSFETYLSNATVSVGMQDLLLSSIFFCGESISKHLMQEIKNSRCLQLTCLIARLCNDIGTYQFEREKGEVASSITCYMRENRGITESQAIEHLQGIIDESWKELTEEFLTPSQIPRSIKRLMFETARIFQFIYPKKDNFKDPSKAMASLIQNVLYKPAE.

Residues D284, D286, D501, D505, N647, T651, and E655 each contribute to the Mg(2+) site. The DXDD motif signature appears at 284 to 287 (DIDD). The DDXXD motif signature appears at 501-505 (DDLAD).

Belongs to the terpene synthase family. Mg(2+) serves as cofactor.

It catalyses the reaction geranylgeranyl diphosphate + H2O = (13E)-labda-7,13-dien-15-ol + diphosphate. Its pathway is secondary metabolite biosynthesis; terpenoid biosynthesis. In terms of biological role, bifunctional diterpene synthase that directly generates the endocyclic double bond, as well as the hydroxyl group: produces an endocyclic double bond isomer of copalyl diphosphate (CPP), and carries out subsequent replacement of the diphosphate by a hydroxyl group to form (13E)-labda-7,13-dien-15-ol. This chain is (13E)-labda-7,13-dien-15-ol synthase, found in Selaginella moellendorffii (Spikemoss).